The chain runs to 550 residues: Arginine--tRNA ligase (550 aa).

The 'HIGH' region motif lies at 130 to 140; the sequence is ANPTGPIHLGG.

Belongs to the class-I aminoacyl-tRNA synthetase family. In terms of assembly, monomer.

It is found in the cytoplasm. The catalysed reaction is tRNA(Arg) + L-arginine + ATP = L-arginyl-tRNA(Arg) + AMP + diphosphate. The sequence is that of Arginine--tRNA ligase from Corynebacterium glutamicum (strain R).